A 224-amino-acid polypeptide reads, in one-letter code: Ribosome maturation factor RimM (224 aa).

Residues M1–P12 show a composition bias toward low complexity. Disordered stretches follow at residues M1–V46 and V204–G224. The PRC barrel domain occupies E137–L211.

Belongs to the RimM family. In terms of assembly, binds ribosomal protein uS19.

The protein resides in the cytoplasm. In terms of biological role, an accessory protein needed during the final step in the assembly of 30S ribosomal subunit, possibly for assembly of the head region. Essential for efficient processing of 16S rRNA. May be needed both before and after RbfA during the maturation of 16S rRNA. It has affinity for free ribosomal 30S subunits but not for 70S ribosomes. In Methylorubrum populi (strain ATCC BAA-705 / NCIMB 13946 / BJ001) (Methylobacterium populi), this protein is Ribosome maturation factor RimM.